We begin with the raw amino-acid sequence, 309 residues long: Probable manganese-dependent inorganic pyrophosphatase (309 aa).

Positions 9, 13, 15, 75, 97, and 149 each coordinate Mn(2+).

The protein belongs to the PPase class C family. Requires Mn(2+) as cofactor.

Its subcellular location is the cytoplasm. It catalyses the reaction diphosphate + H2O = 2 phosphate + H(+). This Staphylococcus haemolyticus (strain JCSC1435) protein is Probable manganese-dependent inorganic pyrophosphatase.